The primary structure comprises 1154 residues: CRISPR-associated endoribonuclease Cas13a (1154 aa).

2 HEPN-like fold regions span residues 330-466 (TTSN…RFIN) and 923-1154 (FVHL…EMKK).

This sequence belongs to the CRISPR-associated endoribonuclease Cas13a family. It depends on a divalent metal cation as a cofactor.

Its activity is regulated as follows. Target RNA acts as an activator for non-specific ssRNA degradation. Functionally, CRISPR (clustered regularly interspaced short palindromic repeat), is an adaptive immune system that provides protection against mobile genetic elements (viruses, transposable elements and conjugative plasmids). CRISPR clusters contain sequences complementary to antecedent mobile elements and target invading nucleic acids. Unlike many single-component effectors, this CRISPR-Cas system targets RNA. CRISPR clusters are transcribed from pre-CRISPR RNA (crRNA) and processed into crRNA by this protein. Cleaves linear target ssRNA in a pre-crRNA-dependent fashion, preferentially before U residues. Binding a viable target RNA target activates this protein for non-specific RNA degradation in vitro (called collateral RNA degradation), which is fairly sensitive as it requires picomolar levels of viable target RNA. This chain is CRISPR-associated endoribonuclease Cas13a, found in Paludibacter propionicigenes (strain DSM 17365 / JCM 13257 / WB4).